A 236-amino-acid chain; its full sequence is 2,3,4,5-tetrahydropyridine-2,6-dicarboxylate N-acetyltransferase (236 aa).

It belongs to the transferase hexapeptide repeat family. DapH subfamily.

It catalyses the reaction (S)-2,3,4,5-tetrahydrodipicolinate + acetyl-CoA + H2O = L-2-acetamido-6-oxoheptanedioate + CoA. It functions in the pathway amino-acid biosynthesis; L-lysine biosynthesis via DAP pathway; LL-2,6-diaminopimelate from (S)-tetrahydrodipicolinate (acetylase route): step 1/3. Functionally, catalyzes the transfer of an acetyl group from acetyl-CoA to tetrahydrodipicolinate. In Listeria monocytogenes serotype 4b (strain CLIP80459), this protein is 2,3,4,5-tetrahydropyridine-2,6-dicarboxylate N-acetyltransferase.